Here is a 373-residue protein sequence, read N- to C-terminus: UDP-N-acetylglucosamine--N-acetylmuramyl-(pentapeptide) pyrophosphoryl-undecaprenol N-acetylglucosamine transferase (373 aa).

Residues 15–17 (TGG), Asn-126, Arg-170, Ser-198, and Gln-300 each bind UDP-N-acetyl-alpha-D-glucosamine.

This sequence belongs to the glycosyltransferase 28 family. MurG subfamily.

Its subcellular location is the cell inner membrane. The enzyme catalyses di-trans,octa-cis-undecaprenyl diphospho-N-acetyl-alpha-D-muramoyl-L-alanyl-D-glutamyl-meso-2,6-diaminopimeloyl-D-alanyl-D-alanine + UDP-N-acetyl-alpha-D-glucosamine = di-trans,octa-cis-undecaprenyl diphospho-[N-acetyl-alpha-D-glucosaminyl-(1-&gt;4)]-N-acetyl-alpha-D-muramoyl-L-alanyl-D-glutamyl-meso-2,6-diaminopimeloyl-D-alanyl-D-alanine + UDP + H(+). It functions in the pathway cell wall biogenesis; peptidoglycan biosynthesis. In terms of biological role, cell wall formation. Catalyzes the transfer of a GlcNAc subunit on undecaprenyl-pyrophosphoryl-MurNAc-pentapeptide (lipid intermediate I) to form undecaprenyl-pyrophosphoryl-MurNAc-(pentapeptide)GlcNAc (lipid intermediate II). The chain is UDP-N-acetylglucosamine--N-acetylmuramyl-(pentapeptide) pyrophosphoryl-undecaprenol N-acetylglucosamine transferase from Methylobacterium nodulans (strain LMG 21967 / CNCM I-2342 / ORS 2060).